We begin with the raw amino-acid sequence, 338 residues long: Heme A synthase (338 aa).

Helical transmembrane passes span 6–26 (ITKW…IGGI), 93–113 (GRIT…KGII), 118–138 (IAPY…GWYM), 154–174 (LAFH…QLIK), and 201–221 (VIYL…GLIY). Residue His256 coordinates heme. 3 helical membrane passes run 258-278 (LGGY…LKIE), 285-305 (IAYF…ITLL), and 308-328 (VPII…SVII). His316 is a binding site for heme.

It belongs to the COX15/CtaA family. Type 2 subfamily. Interacts with CtaB. Heme b serves as cofactor.

Its subcellular location is the cell membrane. The catalysed reaction is Fe(II)-heme o + 2 A + H2O = Fe(II)-heme a + 2 AH2. It participates in porphyrin-containing compound metabolism; heme A biosynthesis; heme A from heme O: step 1/1. Its function is as follows. Catalyzes the conversion of heme O to heme A by two successive hydroxylations of the methyl group at C8. The first hydroxylation forms heme I, the second hydroxylation results in an unstable dihydroxymethyl group, which spontaneously dehydrates, resulting in the formyl group of heme A. The polypeptide is Heme A synthase (Rickettsia canadensis (strain McKiel)).